We begin with the raw amino-acid sequence, 522 residues long: Phosphatidylinositol 3,4,5-trisphosphate 3-phosphatase TPTE2 (522 aa).

Residues 1–11 are compositionally biased toward polar residues; it reads MNESPQTNEFK. The tract at residues 1–28 is disordered; sequence MNESPQTNEFKGTTEEAPAKESPHTSEF. Residues 12–27 show a composition bias toward basic and acidic residues; sequence GTTEEAPAKESPHTSE. A run of 3 helical transmembrane segments spans residues 66 to 86, 111 to 131, and 146 to 166; these read IVHS…LVLL, ISLA…FVEG, and AIIV…IKLL. The Phosphatase tensin-type domain occupies 210-386; sequence RRYTRDGFDL…GYFAQVKHLY (177 aa). Cys-320 acts as the Phosphocysteine intermediate in catalysis. One can recognise a C2 tensin-type domain in the interval 393–522; sequence RRILFIKRFI…FAVEILFGEK (130 aa).

Isoform 3 is expressed in testis, brain and stomach while isoform 4 seems to be testis-specific.

Its subcellular location is the endoplasmic reticulum membrane. It localises to the golgi apparatus membrane. It is found in the cytoplasm. It catalyses the reaction a 1,2-diacyl-sn-glycero-3-phospho-(1D-myo-inositol-3,4,5-trisphosphate) + H2O = a 1,2-diacyl-sn-glycero-3-phospho-(1D-myo-inositol-4,5-bisphosphate) + phosphate. Its function is as follows. Acts as a lipid phosphatase, removing the phosphate in the D3 position of the inositol ring from phosphatidylinositol 3,4,5-trisphosphate. In terms of biological role, shows no phosphoinositide phosphatase activity. This is Phosphatidylinositol 3,4,5-trisphosphate 3-phosphatase TPTE2 (TPTE2) from Homo sapiens (Human).